The primary structure comprises 162 residues: Large ribosomal subunit protein bL9 (162 aa).

The protein belongs to the bacterial ribosomal protein bL9 family.

Binds to the 23S rRNA. The chain is Large ribosomal subunit protein bL9 from Chlorobaculum parvum (strain DSM 263 / NCIMB 8327) (Chlorobium vibrioforme subsp. thiosulfatophilum).